We begin with the raw amino-acid sequence, 563 residues long: Arginine--tRNA ligase (563 aa).

The 'HIGH' region signature appears at 121-131 (PNIAKPFSIGH).

This sequence belongs to the class-I aminoacyl-tRNA synthetase family. As to quaternary structure, monomer.

Its subcellular location is the cytoplasm. It carries out the reaction tRNA(Arg) + L-arginine + ATP = L-arginyl-tRNA(Arg) + AMP + diphosphate. The polypeptide is Arginine--tRNA ligase (Streptococcus pyogenes serotype M3 (strain ATCC BAA-595 / MGAS315)).